The chain runs to 556 residues: Guard cell S-type anion channel SLAC1 (556 aa).

The disordered stretch occupies residues 1-103; the sequence is MERKQSNAHS…GIINGGDGRK (103 aa). Residues 1–189 are Cytoplasmic-facing; sequence MERKQSNAHS…EQWPFLLRFP (189 aa). The stretch at 10-36 forms a coiled coil; it reads STFADINEVEDEAEQELQQQENNNNKR. The segment covering 25-34 has biased composition (low complexity); the sequence is ELQQQENNNN. Ser-59 is subject to Phosphoserine; by SRK2E. Residues 69 to 79 are compositionally biased toward basic and acidic residues; the sequence is RESRERDDKKS. Ser-86, Ser-113, and Ser-120 each carry phosphoserine; by SRK2E. The segment covering 86–99 has biased composition (gly residues); that stretch reads SFGGFESGGIINGG. Ser-146 is subject to Phosphoserine. A helical membrane pass occupies residues 190 to 210; sequence IGCFGICLGLSSQAVLWLALA. The Extracellular segment spans residues 211-216; the sequence is KSPATN. A helical membrane pass occupies residues 217–237; it reads FLHITPLINLVVWLFSLVVLV. At 238–265 the chain is on the cytoplasmic side; the sequence is SVSFTYILKCIFYFEAVKREYFHPVRVN. Residues 266–286 traverse the membrane as a helical segment; sequence FFFAPWVVCMFLAISVPPMFS. At 287 to 295 the chain is on the extracellular side; it reads PNRKYLHPA. The helical transmembrane segment at 296 to 316 threads the bilayer; the sequence is IWCVFMGPYFFLELKIYGQWL. Residues 317–325 lie on the Cytoplasmic side of the membrane; sequence SGGKRRLCK. The chain crosses the membrane as a helical span at residues 326 to 346; it reads VANPSSHLSVVGNFVGAILAS. The Extracellular segment spans residues 347–352; sequence KVGWDE. A helical transmembrane segment spans residues 353–373; it reads VAKFLWAVGFAHYLVVFVTLY. The Cytoplasmic segment spans residues 374–388; the sequence is QRLPTSEALPKELHP. The helical transmembrane segment at 389–409 threads the bilayer; the sequence is VYSMFIAAPSAASIAWNTIYG. At 410–418 the chain is on the extracellular side; sequence QFDGCSRTC. Residues 419–439 form a helical membrane-spanning segment; the sequence is FFIALFLYISLVARINFFTGF. Residue Lys-440 is a topological domain, cytoplasmic. The helical transmembrane segment at 441–463 threads the bilayer; that stretch reads FSVAWWSYTFPMTTASVATIKYA. The Extracellular segment spans residues 464–479; it reads EAVPGYPSRALALTLS. The helical transmembrane segment at 480 to 500 threads the bilayer; the sequence is FISTAMVCVLFVSTLLHAFVW. At 501-556 the chain is on the cytoplasmic side; the sequence is QTLFPNDLAIAITKRKLTREKKPFKRAYDLKRWTKQALAKKISAEKDFEAEEESHH.

The protein belongs to the SLAC1 S-type anion channel family. In terms of assembly, homotrimer. Interacts with SRK2E, CPK6, CPK21, CPK23 and PP2CA. The channel is inactivated upon PP2CA and ABI1 binding. Interacts with KAT1, KAT2, KAT3/KC1 and AKT2. Interacts with GHR1. Phosphorylation by SRK2E, especially on Ser-120, activates the channel. Also phosphorylated and activated by CPK21 and CPK23. Abscisic acid (ABA) promotes phosphorylation. This phosphorylation is inhibited by ABI1. Phosphorylated and activated by GHR1; this phosphorylation is repressed by ABI2 but not ABI1. Phosphorylated by HT1 on N-terminus but not C-terminus. Preferentially expressed in guard cells. Also detected in the vascular strands close to the leaf margins.

It is found in the cell membrane. With respect to regulation, activated by GHR1-mediated phosphorylation which is negatively regulated by ABI2 but not ABI1. Activation by SRK2E/OST1 and GHR1 is repressed by HT1. Functionally, slow, weak voltage-dependent S-type anion efflux channel involved in maintenance of anion homeostasis. Cl(-) efflux through SLAC1 causes membrane depolarization, which activates outward-rectifying K1 channels, leading to KCl and water efflux to reduce turgor further and cause stomatal closure, that reduces water loss and promotes leaf turgor. Essential for stomatal closure in response to CO(2), abscisic acid (ABA), ozone O(3), light/dark transitions, humidity change, calcium ions, hydrogen peroxide H(2)O(2), reactive oxygen species (ROS), and nitric oxide. Binds to the highly selective inward-rectifying potassium channels KAT1 and AKT2, and inhibits their activities. Functions as an essential negative regulator of inward potassium channels in guard cells. Essential for the efficient stomatal closure and opening in guard cells. Involved in the local and/or systemic stomatal responses (e.g. stomatal closure) to light stress. This is Guard cell S-type anion channel SLAC1 from Arabidopsis thaliana (Mouse-ear cress).